The following is a 79-amino-acid chain: UPF0180 protein BcerKBAB4_1316 (79 aa).

It belongs to the UPF0180 family.

The polypeptide is UPF0180 protein BcerKBAB4_1316 (Bacillus mycoides (strain KBAB4) (Bacillus weihenstephanensis)).